A 313-amino-acid polypeptide reads, in one-letter code: Malate dehydrogenase (313 aa).

NAD(+)-binding positions include 8–13 (GAGNVG) and Asp33. Substrate is bound by residues Arg83 and Arg89. Residues Asn96 and 119-121 (ISN) contribute to the NAD(+) site. 2 residues coordinate substrate: Asn121 and Arg152. His176 serves as the catalytic Proton acceptor.

It belongs to the LDH/MDH superfamily. MDH type 3 family.

The enzyme catalyses (S)-malate + NAD(+) = oxaloacetate + NADH + H(+). Catalyzes the reversible oxidation of malate to oxaloacetate. The chain is Malate dehydrogenase from Bacteroides thetaiotaomicron (strain ATCC 29148 / DSM 2079 / JCM 5827 / CCUG 10774 / NCTC 10582 / VPI-5482 / E50).